We begin with the raw amino-acid sequence, 432 residues long: RNA exonuclease 4 (432 aa).

A compositionally biased stretch (basic residues) spans 42 to 54 (ARKKAKKKFRKSK). The disordered stretch occupies residues 42-177 (ARKKAKKKFR…AKKRTYSDIS (136 aa)). A compositionally biased stretch (basic and acidic residues) spans 121-137 (KASDKSKGDKQRTEKAK). Ser123 bears the Phosphoserine mark. Lys127 participates in a covalent cross-link: Glycyl lysine isopeptide (Lys-Gly) (interchain with G-Cter in SUMO2). One can recognise an Exonuclease domain in the interval 230 to 381 (KRLGQKKRTI…PSLKRLSEKI (152 aa)).

The protein belongs to the REXO4 family. In terms of assembly, can bind ESR1 and ESR2. This interaction is abrogated by estrogen and augmented by tamoxifen treatment.

It is found in the nucleus. The protein localises to the nucleolus. Functionally, may function as an exonuclease. The sequence is that of RNA exonuclease 4 (Rexo4) from Mus musculus (Mouse).